Here is a 352-residue protein sequence, read N- to C-terminus: Glutamine synthetase cytosolic isozyme (352 aa).

Residues 19 to 98 enclose the GS beta-grasp domain; the sequence is FIAEYIWIDA…VMCDTYTPAG (80 aa). A GS catalytic domain is found at 105–352; the sequence is KRCNAAKIFS…TSMIAETTIL (248 aa).

This sequence belongs to the glutamine synthetase family. In terms of assembly, homooctamer.

It localises to the cytoplasm. It catalyses the reaction L-glutamate + NH4(+) + ATP = L-glutamine + ADP + phosphate + H(+). The protein is Glutamine synthetase cytosolic isozyme (GLN1) of Daucus carota (Wild carrot).